Consider the following 468-residue polypeptide: Uronate isomerase (468 aa).

Belongs to the metallo-dependent hydrolases superfamily. Uronate isomerase family.

The catalysed reaction is D-glucuronate = D-fructuronate. It catalyses the reaction aldehydo-D-galacturonate = keto-D-tagaturonate. The protein operates within carbohydrate metabolism; pentose and glucuronate interconversion. In Lachnospira eligens (strain ATCC 27750 / DSM 3376 / VPI C15-48 / C15-B4) (Eubacterium eligens), this protein is Uronate isomerase.